The chain runs to 427 residues: Serine--tRNA ligase (427 aa).

Thr233–Glu235 contacts L-serine. Arg264–Glu266 serves as a coordination point for ATP. Residue Glu287 participates in L-serine binding. Glu351–Ser354 provides a ligand contact to ATP. L-serine is bound at residue Ser387.

This sequence belongs to the class-II aminoacyl-tRNA synthetase family. Type-1 seryl-tRNA synthetase subfamily. As to quaternary structure, homodimer. The tRNA molecule binds across the dimer.

It is found in the cytoplasm. It catalyses the reaction tRNA(Ser) + L-serine + ATP = L-seryl-tRNA(Ser) + AMP + diphosphate + H(+). The catalysed reaction is tRNA(Sec) + L-serine + ATP = L-seryl-tRNA(Sec) + AMP + diphosphate + H(+). It participates in aminoacyl-tRNA biosynthesis; selenocysteinyl-tRNA(Sec) biosynthesis; L-seryl-tRNA(Sec) from L-serine and tRNA(Sec): step 1/1. Its function is as follows. Catalyzes the attachment of serine to tRNA(Ser). Is also able to aminoacylate tRNA(Sec) with serine, to form the misacylated tRNA L-seryl-tRNA(Sec), which will be further converted into selenocysteinyl-tRNA(Sec). The protein is Serine--tRNA ligase of Buchnera aphidicola subsp. Acyrthosiphon pisum (strain 5A).